The chain runs to 1058 residues: Translation initiation factor IF-2 (1058 aa).

Residues 1–12 (MNDTKTPGDKTL) are compositionally biased toward basic and acidic residues. The interval 1–468 (MNDTKTPGDK…MTGHRGMQES (468 aa)) is disordered. Over residues 54–81 (APGEAGAPSGTPAAAPAATPAPAAAAPR) the composition is skewed to low complexity. Positions 82-95 (PATPAPAAPRPAAP) are enriched in pro residues. Positions 96–108 (ATPAQPAAEAKAP) are enriched in low complexity. The segment covering 109–119 (APAPTPAPAAP) has biased composition (pro residues). Low complexity-rich tracts occupy residues 120 to 156 (AAPV…VEVP) and 164 to 228 (EPVA…QRPG). The span at 244-271 (RSGGPGSDRRGGPGGQNRPGQNRQGGSG) shows a compositional bias: gly residues. Positions 292-364 (ARVREVEERR…ARKRFGEETG (73 aa)) are enriched in basic and acidic residues. Residues 368–396 (GASAPSTSTARPLTPRPAGTTTTTGAPAA) are compositionally biased toward low complexity. Residues 452–461 (FRRRTQRMTG) are compositionally biased toward basic residues. Residues 555–725 (PRPPVVTIMG…SLQSEVLDLK (171 aa)) enclose the tr-type G domain. Residues 564-571 (GHVDHGKT) are G1. Residue 564-571 (GHVDHGKT) participates in GTP binding. A G2 region spans residues 589–593 (GITQH). The G3 stretch occupies residues 611–614 (DTPG). GTP is bound by residues 611-615 (DTPGH) and 665-668 (NKID). Residues 665-668 (NKID) are G4. Residues 701-703 (SAT) are G5.

It belongs to the TRAFAC class translation factor GTPase superfamily. Classic translation factor GTPase family. IF-2 subfamily.

The protein resides in the cytoplasm. Functionally, one of the essential components for the initiation of protein synthesis. Protects formylmethionyl-tRNA from spontaneous hydrolysis and promotes its binding to the 30S ribosomal subunits. Also involved in the hydrolysis of GTP during the formation of the 70S ribosomal complex. The chain is Translation initiation factor IF-2 from Azorhizobium caulinodans (strain ATCC 43989 / DSM 5975 / JCM 20966 / LMG 6465 / NBRC 14845 / NCIMB 13405 / ORS 571).